The primary structure comprises 1179 residues: Putative ankyrin repeat protein RF_0381 (1179 aa).

ANK repeat units follow at residues 282–311, 604–633, 637–666, 670–699, 703–732, 736–765, 769–798, 802–831, 833–860, 864–893, 897–926, 930–959, 963–992, 996–1025, 1029–1058, 1062–1091, 1095–1124, and 1128–1157; these read NGYQ…MHRQ, NKDQ…NPNA, HGVI…DVNA, NGET…NIHA, NGET…DVNA, NGLT…DVNA, SGET…DVNA, NGET…NVNN, KTIL…DIHA, SGET…DIHA, SGET…DINT, DGLT…DVNA, and SGET…DINL.

The sequence is that of Putative ankyrin repeat protein RF_0381 from Rickettsia felis (strain ATCC VR-1525 / URRWXCal2) (Rickettsia azadi).